Reading from the N-terminus, the 239-residue chain is MLVEVLLNTPAQLSLPLYLPDDETFASFYPGENPSLLAAIQSAVHQSHGSYIYFWSREGGGRSHLLHAACAELSQKGEAVGYVPLDKRAYFVPEVLDGMEQLALVCIDNIECIAGDEQWEMAMFNLYNRIVETGRTRLLITGDRPPRQLNLGLPDLASRLDWGQIYKLQPLSDDEKLQALQLRAKLRGFELPEDVGRFLLKRLDREMRTLFMTLDQLDRASITAQRKLTIPFVKEILSL.

The protein belongs to the DnaA family. HdA subfamily. The active form seems to be an ADP-bound monomer. Forms the RIDA complex (regulatory inactivation of DnaA) of ATP-DnaA, ADP-Hda and the DNA-loaded beta sliding clamp (dnaN).

Its function is as follows. Mediates the interaction of DNA replication initiator protein DnaA with DNA polymerase subunit beta sliding clamp (dnaN). Stimulates hydrolysis of ATP-DnaA to ADP-DnaA, rendering DnaA inactive for reinitiation, a process called regulatory inhibition of DnaA or RIDA. The sequence is that of DnaA regulatory inactivator Hda from Yersinia enterocolitica serotype O:8 / biotype 1B (strain NCTC 13174 / 8081).